The chain runs to 113 residues: Cytochrome c (113 aa).

The heme c site is built by cysteine 21, cysteine 24, histidine 25, and methionine 90.

The protein belongs to the cytochrome c family. Post-translationally, binds 1 heme c group covalently per subunit.

It is found in the mitochondrion intermembrane space. In terms of biological role, electron carrier protein. The oxidized form of the cytochrome c heme group can accept an electron from the heme group of the cytochrome c1 subunit of cytochrome reductase. Cytochrome c then transfers this electron to the cytochrome oxidase complex, the final protein carrier in the mitochondrial electron-transport chain. This is Cytochrome c (cytC) from Dictyostelium discoideum (Social amoeba).